Consider the following 314-residue polypeptide: Olfactory receptor 5G3 (314 aa).

The Extracellular segment spans residues 1–24 (MEDKNQTVVTEFLLLGLTDHPYQK). N-linked (GlcNAc...) asparagine glycosylation occurs at N5. A helical transmembrane segment spans residues 25-45 (IVLFFMFLFVYLITLGGNLGM). Residues 46–97 (ITLIWIDPRLHTPMYFFLRHLSFVDICSSSSVVPKMLCNIFAEKKDITFLGC) lie on the Cytoplasmic side of the membrane. C97 and C179 are oxidised to a cystine. The chain crosses the membrane as a helical span at residues 98–118 (AAQMWFFGLFEAAECFLLAAM). At 119–143 (AYDRYVAICKPLLYTLIMSQQVCMQ) the chain is on the extracellular side. The helical transmembrane segment at 144-164 (LVVGPYAMALISTMTHTIFTF) threads the bilayer. The Cytoplasmic segment spans residues 165-167 (CLP). A helical membrane pass occupies residues 168–188 (FCGSNIINHFFCDIFPLLSLA). At 189 to 196 (CADTWVNK) the chain is on the extracellular side. A helical membrane pass occupies residues 197–217 (FVLFVLAGAIGVLSGLIIMVS). Residues 218–237 (YICILMTILKIQTADGKQKA) lie on the Cytoplasmic side of the membrane. A helical membrane pass occupies residues 238 to 258 (FFTCFSHLAAVSILYGTLFLI). Topologically, residues 259–268 (YVRPSSSSSL) are extracellular. The chain crosses the membrane as a helical span at residues 269–289 (GIYKVISLFYTVVIPMVNPLI). The Cytoplasmic portion of the chain corresponds to 290–314 (YSLRNKEVKDAFRRKIERKKFIIGR).

This sequence belongs to the G-protein coupled receptor 1 family.

It is found in the cell membrane. In terms of biological role, odorant receptor. In Homo sapiens (Human), this protein is Olfactory receptor 5G3 (OR5G3).